Here is a 293-residue protein sequence, read N- to C-terminus: Exosome complex component RRP4 (293 aa).

A disordered region spans residues 1–20; the sequence is MALEMRLPKARKPLSESLGR. The S1 motif domain maps to 79–159; it reads EVGDIVVGRI…SDGAVSLHTR (81 aa). Ser124 bears the Phosphoserine mark.

The protein belongs to the RRP4 family. Component of the RNA exosome core complex (Exo-9), composed of EXOSC1, EXOSC2, EXOSC3, EXOSC4, EXOSC5, EXOSC6, EXOSC7, EXOSC8 and EXOSC9; within the complex interacts with EXOSC4 and EXOSC7. The catalytically inactive RNA exosome core complex (Exo-9) associates with the catalytic subunit EXOSC10/RRP6. Exo-9 may associate with DIS3 to form the nucleolar exosome complex, or DIS3L to form the cytoplasmic exosome complex. Exo-9 is formed by a hexameric base ring consisting of the heterodimers EXOSC4-EXOSC9, EXOSC5-EXOSC8 and EXOSC6-EXOSC7, and a cap ring consisting of EXOSC1, EXOSC2 and EXOSC3. The RNA exosome complex associates with cofactors C1D/RRP47, MPHOSPH6/MPP6 and MTREX/MTR4. Interacts with GTPBP1. Interacts with ZFP36L1 (via N-terminus).

The protein resides in the cytoplasm. Its subcellular location is the nucleus. The protein localises to the nucleolus. Its function is as follows. Non-catalytic component of the RNA exosome complex which has 3'-&gt;5' exoribonuclease activity and participates in a multitude of cellular RNA processing and degradation events. In the nucleus, the RNA exosome complex is involved in proper maturation of stable RNA species such as rRNA, snRNA and snoRNA, in the elimination of RNA processing by-products and non-coding 'pervasive' transcripts, such as antisense RNA species and promoter-upstream transcripts (PROMPTs), and of mRNAs with processing defects, thereby limiting or excluding their export to the cytoplasm. The RNA exosome may be involved in Ig class switch recombination (CSR) and/or Ig variable region somatic hypermutation (SHM) by targeting AICDA deamination activity to transcribed dsDNA substrates. In the cytoplasm, the RNA exosome complex is involved in general mRNA turnover and specifically degrades inherently unstable mRNAs containing AU-rich elements (AREs) within their 3' untranslated regions, and in RNA surveillance pathways, preventing translation of aberrant mRNAs. It seems to be involved in degradation of histone mRNA. The catalytic inactive RNA exosome core complex of 9 subunits (Exo-9) is proposed to play a pivotal role in the binding and presentation of RNA for ribonucleolysis, and to serve as a scaffold for the association with catalytic subunits and accessory proteins or complexes. EXOSC2 as peripheral part of the Exo-9 complex stabilizes the hexameric ring of RNase PH-domain subunits through contacts with EXOSC4 and EXOSC7. This chain is Exosome complex component RRP4 (Exosc2), found in Mus musculus (Mouse).